The sequence spans 459 residues: Cysteine--tRNA ligase (459 aa).

Residue Cys28 participates in Zn(2+) binding. A 'HIGH' region motif is present at residues 30–40 (VTIYDLCHIGH). Positions 209, 234, and 238 each coordinate Zn(2+). A 'KMSKS' region motif is present at residues 266-270 (KMSKS). Lys269 contacts ATP.

The protein belongs to the class-I aminoacyl-tRNA synthetase family. As to quaternary structure, monomer. It depends on Zn(2+) as a cofactor.

The protein resides in the cytoplasm. It carries out the reaction tRNA(Cys) + L-cysteine + ATP = L-cysteinyl-tRNA(Cys) + AMP + diphosphate. This Shewanella pealeana (strain ATCC 700345 / ANG-SQ1) protein is Cysteine--tRNA ligase.